Reading from the N-terminus, the 524-residue chain is 2-isopropylmalate synthase (524 aa).

In terms of domain architecture, Pyruvate carboxyltransferase spans 5 to 267 (VIIFDTTLRD…HTNINHQEIF (263 aa)). Mn(2+) contacts are provided by Asp-14, His-202, His-204, and Asn-238. Residues 392-524 (SLDYFSVQSG…SKHQNNQETV (133 aa)) are regulatory domain.

The protein belongs to the alpha-IPM synthase/homocitrate synthase family. LeuA type 1 subfamily. Homodimer. The cofactor is Mn(2+).

Its subcellular location is the cytoplasm. It catalyses the reaction 3-methyl-2-oxobutanoate + acetyl-CoA + H2O = (2S)-2-isopropylmalate + CoA + H(+). The protein operates within amino-acid biosynthesis; L-leucine biosynthesis; L-leucine from 3-methyl-2-oxobutanoate: step 1/4. In terms of biological role, catalyzes the condensation of the acetyl group of acetyl-CoA with 3-methyl-2-oxobutanoate (2-ketoisovalerate) to form 3-carboxy-3-hydroxy-4-methylpentanoate (2-isopropylmalate). The sequence is that of 2-isopropylmalate synthase from Serratia proteamaculans (strain 568).